The sequence spans 414 residues: TAR DNA-binding protein 43 (414 aa).

Residues Lys-79, Lys-84, Lys-95, Lys-102, and Lys-181 each participate in a glycyl lysine isopeptide (Lys-Gly) (interchain with G-Cter in SUMO2) cross-link. RRM domains are found at residues 104–200 (SDLI…RCTE) and 191–262 (RKVF…NAEP). Ser-183 is subject to Phosphoserine. Positions 216–414 (DVMDVFIPKP…MDSKSSGWGM (199 aa)) are interaction with UBQLN2. Positions 261-274 (EPKHNSNRQLERSG) are enriched in basic and acidic residues. 2 disordered regions span residues 261–303 (EPKH…GNNQ) and 341–373 (ASQQ…GNNS). A Glycyl lysine isopeptide (Lys-Gly) (interchain with G-Cter in SUMO2) cross-link involves residue Lys-263. Residues 275 to 303 (RFGGNPGGFGNQGGFGNSRGGGAGLGNNQ) show a composition bias toward gly residues. Phosphoserine is present on Ser-292. An Omega-N-methylarginine modification is found at Arg-293. A compositionally biased stretch (low complexity) spans 342–358 (SQQNQSGPSGNNQNQGN).

As to quaternary structure, monomer and component of the SFPQ-NONO complex, which is probably a heterotetramer of two 52 kDa (NONO) and two 100 kDa (SFPQ) subunits. NONO is a component of spliceosome and U5.4/6 snRNP complexes. Interacts with CPNE4 (via VWFA domain). Forms heterodimers with PSPC1; this involves formation of a coiled coil domain by helices from both proteins. Part of complex consisting of SFPQ, NONO and MATR3. Part of a complex consisting of SFPQ, NONO and NR5A1. Part of a complex consisting of SFPQ, NONO and TOP1. Interacts with SPI1. Interacts with RNF43. Interacts with PER1 and PER2. Part of the HDP-RNP complex composed of at least HEXIM1, PRKDC, XRCC5, XRCC6, paraspeckle proteins (SFPQ, NONO, PSPC1, RBM14, and MATR3) and NEAT1 RNA. Interacts (via second RRM domain) with WASL; the interaction is direct. Component of a multiprotein complex with WASL and SFPQ. Interacts with ERCC6. Interacts (via DNA-binding domain) with TET1. Post-translationally, hyperphosphorylated. In terms of processing, ubiquitinated.

The protein localises to the nucleus. Its subcellular location is the nucleolus. The protein resides in the nucleus speckle. It is found in the chromosome. It localises to the mitochondrion. In terms of biological role, DNA- and RNA binding protein, involved in several nuclear processes. Binds the conventional octamer sequence in double-stranded DNA. Also binds single-stranded DNA and RNA at a site independent of the duplex site. Involved in pre-mRNA splicing, probably as a heterodimer with SFPQ. Interacts with U5 snRNA, probably by binding to a purine-rich sequence located on the 3' side of U5 snRNA stem 1b. Together with PSPC1, required for the formation of nuclear paraspeckles. The SFPQ-NONO heteromer associated with MATR3 may play a role in nuclear retention of defective RNAs. The SFPQ-NONO heteromer may be involved in DNA unwinding by modulating the function of topoisomerase I/TOP1. The SFPQ-NONO heteromer may be involved in DNA non-homologous end joining (NHEJ) required for double-strand break repair and V(D)J recombination and may stabilize paired DNA ends. In vitro, the complex strongly stimulates DNA end joining, binds directly to the DNA substrates and cooperates with the Ku70/G22P1-Ku80/XRCC5 (Ku) dimer to establish a functional preligation complex. NONO is involved in transcriptional regulation. The SFPQ-NONO-NR5A1 complex binds to the CYP17 promoter and regulates basal and cAMP-dependent transcriptional activity. NONO binds to an enhancer element in long terminal repeats of endogenous intracisternal A particles (IAPs) and activates transcription. Regulates the circadian clock by repressing the transcriptional activator activity of the CLOCK-BMAL1 heterodimer. Important for the functional organization of GABAergic synapses. Plays a specific and important role in the regulation of synaptic RNAs and GPHN/gephyrin scaffold structure, through the regulation of GABRA2 transcript. Plays a key role during neuronal differentiation by recruiting TET1 to genomic loci and thereby regulating 5-hydroxymethylcytosine levels. Plays a role in the regulation of DNA virus-mediated innate immune response by assembling into the HDP-RNP complex, a complex that serves as a platform for IRF3 phosphorylation and subsequent innate immune response activation through the cGAS-STING pathway. The chain is TAR DNA-binding protein 43 (TARDBP) from Pongo abelii (Sumatran orangutan).